The primary structure comprises 276 residues: Secretagogin (276 aa).

6 EF-hand domains span residues 12–47 (LDAA…LLAK), 58–93 (NVQK…EDEN), 105–140 (DNSV…LFLH), 149–184 (ELEE…QENF), 197–232 (ERKR…MMEL), and 240–276 (VDLD…KINP). Ca(2+) is bound by residues Asp25, Tyr31, Glu36, Ser73, Glu75, Arg77, Glu82, Asp118, Asp120, Ser122, Glu129, Asp162, Asn164, Asp166, Arg168, Asp173, Asp210, Ser212, Thr214, Glu221, Asp254, Asn256, Asp258, Lys260, and Glu265.

The protein localises to the cytoplasm. It is found in the secreted. Its subcellular location is the cytoplasmic vesicle. The protein resides in the secretory vesicle membrane. This chain is Secretagogin (Scgn), found in Mus musculus (Mouse).